Consider the following 219-residue polypeptide: Probable GTP-binding protein EngB (219 aa).

The 178-residue stretch at 42-219 (SVPEIAFAGR…RTAVLEAVEL (178 aa)) folds into the EngB-type G domain. GTP is bound by residues 50–57 (GRSNVGKS), 77–81 (GRTQE), 97–100 (DMPG), 164–167 (TKAD), and 198–200 (TSS). Residues Ser-57 and Thr-79 each contribute to the Mg(2+) site.

Belongs to the TRAFAC class TrmE-Era-EngA-EngB-Septin-like GTPase superfamily. EngB GTPase family. It depends on Mg(2+) as a cofactor.

In terms of biological role, necessary for normal cell division and for the maintenance of normal septation. The polypeptide is Probable GTP-binding protein EngB (Sphingopyxis alaskensis (strain DSM 13593 / LMG 18877 / RB2256) (Sphingomonas alaskensis)).